The sequence spans 657 residues: tRNA 5-methylaminomethyl-2-thiouridine biosynthesis bifunctional protein MnmC (657 aa).

A tRNA (mnm(5)s(2)U34)-methyltransferase region spans residues 1–233 (MPRGLILATP…KRDMTVAAFP (233 aa)). An FAD-dependent cmnm(5)s(2)U34 oxidoreductase region spans residues 256 to 657 (LGAGLAGCSV…RALRHGKHAA (402 aa)).

In the N-terminal section; belongs to the methyltransferase superfamily. tRNA (mnm(5)s(2)U34)-methyltransferase family. It in the C-terminal section; belongs to the DAO family. FAD serves as cofactor.

It is found in the cytoplasm. It carries out the reaction 5-aminomethyl-2-thiouridine(34) in tRNA + S-adenosyl-L-methionine = 5-methylaminomethyl-2-thiouridine(34) in tRNA + S-adenosyl-L-homocysteine + H(+). Functionally, catalyzes the last two steps in the biosynthesis of 5-methylaminomethyl-2-thiouridine (mnm(5)s(2)U) at the wobble position (U34) in tRNA. Catalyzes the FAD-dependent demodification of cmnm(5)s(2)U34 to nm(5)s(2)U34, followed by the transfer of a methyl group from S-adenosyl-L-methionine to nm(5)s(2)U34, to form mnm(5)s(2)U34. The sequence is that of tRNA 5-methylaminomethyl-2-thiouridine biosynthesis bifunctional protein MnmC from Ralstonia nicotianae (strain ATCC BAA-1114 / GMI1000) (Ralstonia solanacearum).